The chain runs to 294 residues: Ribosomal RNA small subunit methyltransferase H (294 aa).

S-adenosyl-L-methionine is bound by residues 36-38 (GGH), Asp-55, Phe-82, Asp-97, and Gln-104. The disordered stretch occupies residues 265 to 285 (KPTVATDDEQNRNPRSRSAKW).

Belongs to the methyltransferase superfamily. RsmH family.

It is found in the cytoplasm. The catalysed reaction is cytidine(1402) in 16S rRNA + S-adenosyl-L-methionine = N(4)-methylcytidine(1402) in 16S rRNA + S-adenosyl-L-homocysteine + H(+). Its function is as follows. Specifically methylates the N4 position of cytidine in position 1402 (C1402) of 16S rRNA. In Synechococcus sp. (strain CC9902), this protein is Ribosomal RNA small subunit methyltransferase H.